The chain runs to 236 residues: UPF0257 lipoprotein YnfC (236 aa).

Residues 1 to 16 (MKYKLLPCLLAILLTG) form the signal peptide. C17 carries the N-palmitoyl cysteine lipid modification. C17 carries the S-diacylglycerol cysteine lipid modification.

This sequence belongs to the UPF0257 family.

The protein resides in the cell membrane. The polypeptide is UPF0257 lipoprotein YnfC (Escherichia coli O157:H7).